The primary structure comprises 327 residues: Probable cell division protein WhiA (327 aa).

Residues 275–308 (SLEELGRLADPPMTKDAVAGRIRRLLSMADRKAK) constitute a DNA-binding region (H-T-H motif). The tract at residues 304–327 (DRKAKQDGIPDTESAVTPDLLEDA) is disordered.

Belongs to the WhiA family.

In terms of biological role, involved in cell division and chromosome segregation. This chain is Probable cell division protein WhiA, found in Mycobacterium sp. (strain MCS).